A 214-amino-acid polypeptide reads, in one-letter code: Thymidylate kinase (214 aa).

Gly-7 to Arg-14 is an ATP binding site. DTMP-binding residues include Asp-9, Tyr-39, Phe-70, Arg-74, Arg-95, Asn-100, and Tyr-103. Asp-9 contacts Mg(2+). Residues Gly-147 to Gly-159 are LID. The dTMP site is built by Asp-163 and Tyr-165. A Mg(2+)-binding site is contributed by Glu-166.

Belongs to the thymidylate kinase family. Homodimer. Mg(2+) serves as cofactor.

The catalysed reaction is dTMP + ATP = dTDP + ADP. Its pathway is pyrimidine metabolism; dTTP biosynthesis. Functionally, catalyzes the reversible phosphorylation of deoxythymidine monophosphate (dTMP) to deoxythymidine diphosphate (dTDP), using ATP as its preferred phosphoryl donor. Situated at the junction of both de novo and salvage pathways of deoxythymidine triphosphate (dTTP) synthesis, is essential for DNA synthesis and cellular growth. The sequence is that of Thymidylate kinase (tmk) from Mycobacterium tuberculosis (strain CDC 1551 / Oshkosh).